The sequence spans 214 residues: Alkaline phosphatase-like protein (214 aa).

Transmembrane regions (helical) follow at residues 3–23, 48–68, 141–161, and 177–197; these read EIIIQVMNQFGYFGVAFLIMI, LGIIGMIIAATIGSVLGALIL, FLILTTLGTLIWNIVLVSLGA, and YSSVVVAILGVIFILGLLLFV.

The protein belongs to the DedA family.

It is found in the cell membrane. The chain is Alkaline phosphatase-like protein (apl) from Lactococcus lactis subsp. cremoris (strain MG1363).